The primary structure comprises 254 residues: MVIANSNIIFVAGLGGIGLDTSREIVKSGPKNLVVLDRIDNPAAIAELKALNPKVTITFYPYDVTVPLAETKKLLKTIFDKLKTVDLLINGAGILDDTQIERTIAVNFTGTVNTTTAIMDFWDKRKGGPGGVVANICSVTGFNSIYQVPVYSASKAAALSFTTSLAKLAHITGVTVYSINPGITKTVLVHKFNSWLNVEPRVAELLLEHPTQTTLQCAQNFVKAIEANQNGAIWKLDLGRLDAIEWTKHWDSGI.

Phe10–Leu33 is an NAD(+) binding site. Ser138 provides a ligand contact to substrate. Tyr151 (proton acceptor) is an active-site residue.

This sequence belongs to the short-chain dehydrogenases/reductases (SDR) family. As to quaternary structure, homodimer.

The enzyme catalyses a primary alcohol + NAD(+) = an aldehyde + NADH + H(+). It carries out the reaction a secondary alcohol + NAD(+) = a ketone + NADH + H(+). The protein is Alcohol dehydrogenase (Adh) of Drosophila heteroneura (Fruit fly).